Reading from the N-terminus, the 79-residue chain is Acyl carrier protein (79 aa).

Residues 2–77 enclose the Carrier domain; sequence ADFEARVKEI…SAIDYVKTHV (76 aa). Ser-37 is subject to O-(pantetheine 4'-phosphoryl)serine.

The protein belongs to the acyl carrier protein (ACP) family. Post-translationally, 4'-phosphopantetheine is transferred from CoA to a specific serine of apo-ACP by AcpS. This modification is essential for activity because fatty acids are bound in thioester linkage to the sulfhydryl of the prosthetic group.

It localises to the cytoplasm. It participates in lipid metabolism; fatty acid biosynthesis. Its function is as follows. Carrier of the growing fatty acid chain in fatty acid biosynthesis. The protein is Acyl carrier protein of Endomicrobium trichonymphae.